The sequence spans 247 residues: Uridylate kinase (247 aa).

17–20 (KFSG) serves as a coordination point for ATP. Gly-59 contacts UMP. ATP-binding residues include Gly-60 and Arg-64. UMP is bound by residues Asp-79 and 140–147 (TGNPFFTT). Residues Thr-167, Tyr-173, and Asp-176 each coordinate ATP.

Belongs to the UMP kinase family. As to quaternary structure, homohexamer.

The protein localises to the cytoplasm. The catalysed reaction is UMP + ATP = UDP + ADP. It functions in the pathway pyrimidine metabolism; CTP biosynthesis via de novo pathway; UDP from UMP (UMPK route): step 1/1. Its activity is regulated as follows. Inhibited by UTP. Catalyzes the reversible phosphorylation of UMP to UDP. The chain is Uridylate kinase from Legionella pneumophila (strain Paris).